The primary structure comprises 151 residues: D-aminoacyl-tRNA deacylase (151 aa).

Positions 137–138 (GP) match the Gly-cisPro motif, important for rejection of L-amino acids motif.

The protein belongs to the DTD family. As to quaternary structure, homodimer.

Its subcellular location is the cytoplasm. It catalyses the reaction glycyl-tRNA(Ala) + H2O = tRNA(Ala) + glycine + H(+). The enzyme catalyses a D-aminoacyl-tRNA + H2O = a tRNA + a D-alpha-amino acid + H(+). Its function is as follows. An aminoacyl-tRNA editing enzyme that deacylates mischarged D-aminoacyl-tRNAs. Also deacylates mischarged glycyl-tRNA(Ala), protecting cells against glycine mischarging by AlaRS. Acts via tRNA-based rather than protein-based catalysis; rejects L-amino acids rather than detecting D-amino acids in the active site. By recycling D-aminoacyl-tRNA to D-amino acids and free tRNA molecules, this enzyme counteracts the toxicity associated with the formation of D-aminoacyl-tRNA entities in vivo and helps enforce protein L-homochirality. The sequence is that of D-aminoacyl-tRNA deacylase from Solibacter usitatus (strain Ellin6076).